The sequence spans 195 residues: Nascent polypeptide-associated complex subunit alpha (195 aa).

2 disordered regions span residues 1–59 (MTGS…SRSE) and 132–153 (TREAPQLKTVEEDENEDVEEDS). A compositionally biased stretch (basic and acidic residues) spans 7-16 (TRQKEVKEPQ). Positions 19 to 33 (VSDDSDNEAVEQELT) are enriched in acidic residues. A compositionally biased stretch (basic and acidic residues) spans 47–59 (DHIDKQAKQSRSE). Residues 56 to 121 (SRSEKKARKL…AKIEDLTQHA (66 aa)) enclose the NAC-A/B domain. Acidic residues predominate over residues 142 to 153 (EEDENEDVEEDS).

Belongs to the NAC-alpha family. In terms of assembly, may be part of the nascent polypeptide-associated complex (NAC), which is a heterodimer of icd-2 and icd-1 (via NAC-A/B domains).

It localises to the cytoplasm. Functionally, may prevent inappropriate targeting of non-secretory polypeptides to the endoplasmic reticulum (ER). Plays a role in the response to heat stress. The protein is Nascent polypeptide-associated complex subunit alpha of Caenorhabditis elegans.